The sequence spans 263 residues: Polyamine aminopropyltransferase (263 aa).

Residues 1–221 enclose the PABS domain; it reads MARHPYRRLR…AVMAFQSSPK (221 aa). S-methyl-5'-thioadenosine-binding positions include aspartate 98 and 126 to 127; that span reads DG. The Proton acceptor role is filled by aspartate 144.

Belongs to the spermidine/spermine synthase family. Homodimer or homotetramer.

It is found in the cytoplasm. The enzyme catalyses S-adenosyl 3-(methylsulfanyl)propylamine + putrescine = S-methyl-5'-thioadenosine + spermidine + H(+). Its pathway is amine and polyamine biosynthesis; spermidine biosynthesis; spermidine from putrescine: step 1/1. Catalyzes the irreversible transfer of a propylamine group from the amino donor S-adenosylmethioninamine (decarboxy-AdoMet) to putrescine (1,4-diaminobutane) to yield spermidine. In Neisseria meningitidis serogroup A / serotype 4A (strain DSM 15465 / Z2491), this protein is Polyamine aminopropyltransferase.